Reading from the N-terminus, the 275-residue chain is 2,3,4,5-tetrahydropyridine-2,6-dicarboxylate N-succinyltransferase (275 aa).

It belongs to the transferase hexapeptide repeat family.

The protein localises to the cytoplasm. It carries out the reaction (S)-2,3,4,5-tetrahydrodipicolinate + succinyl-CoA + H2O = (S)-2-succinylamino-6-oxoheptanedioate + CoA. The protein operates within amino-acid biosynthesis; L-lysine biosynthesis via DAP pathway; LL-2,6-diaminopimelate from (S)-tetrahydrodipicolinate (succinylase route): step 1/3. In Paraburkholderia phytofirmans (strain DSM 17436 / LMG 22146 / PsJN) (Burkholderia phytofirmans), this protein is 2,3,4,5-tetrahydropyridine-2,6-dicarboxylate N-succinyltransferase.